The following is a 48-amino-acid chain: Large ribosomal subunit protein bL36c (48 aa).

It belongs to the bacterial ribosomal protein bL36 family.

The protein localises to the plastid. It is found in the chloroplast. The polypeptide is Large ribosomal subunit protein bL36c (rpl36) (Guillardia theta (Cryptophyte)).